A 238-amino-acid chain; its full sequence is Ribonuclease PH (238 aa).

Residues arginine 86 and 124–126 (GTR) contribute to the phosphate site.

Belongs to the RNase PH family. In terms of assembly, homohexameric ring arranged as a trimer of dimers.

The enzyme catalyses tRNA(n+1) + phosphate = tRNA(n) + a ribonucleoside 5'-diphosphate. Functionally, phosphorolytic 3'-5' exoribonuclease that plays an important role in tRNA 3'-end maturation. Removes nucleotide residues following the 3'-CCA terminus of tRNAs; can also add nucleotides to the ends of RNA molecules by using nucleoside diphosphates as substrates, but this may not be physiologically important. Probably plays a role in initiation of 16S rRNA degradation (leading to ribosome degradation) during starvation. In Yersinia pseudotuberculosis serotype O:1b (strain IP 31758), this protein is Ribonuclease PH.